The following is a 282-amino-acid chain: GDT1-like protein 4 (282 aa).

Residues 1–26 (MARRVSTTRLLLLLLLVAAAAAAAAA) form the signal peptide. Helical transmembrane passes span 67–87 (AGLG…VSEI), 106–126 (TVLS…TGLG), 138–158 (TNSA…YIAW), 189–209 (IFSR…FLAE), 227–247 (AVGV…FAVV), and 259–279 (GTVA…SYFY).

The protein belongs to the GDT1 family.

It localises to the membrane. The chain is GDT1-like protein 4 from Oryza sativa subsp. japonica (Rice).